The sequence spans 469 residues: Phosphoglucosamine mutase (469 aa).

S117 serves as the catalytic Phosphoserine intermediate. Positions 117, 263, 265, and 267 each coordinate Mg(2+). The residue at position 117 (S117) is a Phosphoserine.

Belongs to the phosphohexose mutase family. It depends on Mg(2+) as a cofactor. Post-translationally, activated by phosphorylation.

The catalysed reaction is alpha-D-glucosamine 1-phosphate = D-glucosamine 6-phosphate. Its function is as follows. Catalyzes the conversion of glucosamine-6-phosphate to glucosamine-1-phosphate. This Anaeromyxobacter sp. (strain Fw109-5) protein is Phosphoglucosamine mutase.